We begin with the raw amino-acid sequence, 429 residues long: Glutamate-1-semialdehyde 2,1-aminomutase 2 (429 aa).

At K268 the chain carries N6-(pyridoxal phosphate)lysine.

Belongs to the class-III pyridoxal-phosphate-dependent aminotransferase family. HemL subfamily. In terms of assembly, homodimer. It depends on pyridoxal 5'-phosphate as a cofactor.

Its subcellular location is the cytoplasm. The enzyme catalyses (S)-4-amino-5-oxopentanoate = 5-aminolevulinate. The protein operates within porphyrin-containing compound metabolism; protoporphyrin-IX biosynthesis; 5-aminolevulinate from L-glutamyl-tRNA(Glu): step 2/2. The protein is Glutamate-1-semialdehyde 2,1-aminomutase 2 of Geobacillus thermodenitrificans (strain NG80-2).